A 271-amino-acid polypeptide reads, in one-letter code: Tritrans,polycis-undecaprenyl-diphosphate synthase (geranylgeranyl-diphosphate specific) (271 aa).

The active site involves D50. Mg(2+) is bound at residue D50. Residues G51–R54, F55, H67, and S95–E97 contribute to the substrate site. Catalysis depends on N98, which acts as the Proton acceptor. Residues R101, R220, and R226 to S228 each bind substrate. E239 provides a ligand contact to Mg(2+).

It belongs to the UPP synthase family. Homodimer. The cofactor is Mg(2+).

It carries out the reaction geranylgeranyl diphosphate + 7 isopentenyl diphosphate = tri-trans,hepta-cis-undecaprenyl diphosphate + 7 diphosphate. In terms of biological role, catalyzes the sequential condensation of isopentenyl diphosphate (IPP) with geranylgeranyl diphosphate (GGPP) to yield (2Z,6Z,10Z,14Z,18Z,22Z,26Z,30E,34E,38E)-undecaprenyl diphosphate (tritrans,heptacis-UPP). It is probably the precursor of glycosyl carrier lipids. The chain is Tritrans,polycis-undecaprenyl-diphosphate synthase (geranylgeranyl-diphosphate specific) from Methanopyrus kandleri (strain AV19 / DSM 6324 / JCM 9639 / NBRC 100938).